The following is a 203-amino-acid chain: Snake venom metalloproteinase fibrolase (203 aa).

Glutamine 1 is subject to Pyrrolidone carboxylic acid. Residues 7–203 (RYVQLVIVAD…NNPQCILNKP (197 aa)) form the Peptidase M12B domain. Disulfide bonds link cysteine 118-cysteine 198, cysteine 158-cysteine 182, and cysteine 160-cysteine 165. Histidine 143 is a Zn(2+) binding site. Glutamate 144 is an active-site residue. Positions 147 and 153 each coordinate Zn(2+).

It belongs to the venom metalloproteinase (M12B) family. P-I subfamily. Monomer. The cofactor is Zn(2+). As to expression, expressed by the venom gland.

It localises to the secreted. The enzyme catalyses Hydrolysis of 14-Ala-|-Leu-15 in insulin B chain and 413-Lys-|-Leu-414 in alpha-chain of fibrinogen.. Its activity is regulated as follows. Is inhibited by EDTA, o-phenanthroline and tetraethylenepentamine. Functionally, snake venom zinc metalloprotease that exhibits direct fibrinolytic activity. In Agkistrodon contortrix contortrix (Southern copperhead), this protein is Snake venom metalloproteinase fibrolase.